Consider the following 67-residue polypeptide: Theromin (67 aa).

Residues 2 to 27 enclose the Antistasin-like domain; it reads CENTECPRACPGEYEFDEDGCNTCVC.

Homodimer. Post-translationally, eight disulfide bonds are present.

It is found in the secreted. Potent thrombin-specific inhibitor. This Theromyzon tessulatum (Duck leech) protein is Theromin.